Here is a 480-residue protein sequence, read N- to C-terminus: Aspartyl/glutamyl-tRNA(Asn/Gln) amidotransferase subunit B (480 aa).

Belongs to the GatB/GatE family. GatB subfamily. As to quaternary structure, heterotrimer of A, B and C subunits.

It catalyses the reaction L-glutamyl-tRNA(Gln) + L-glutamine + ATP + H2O = L-glutaminyl-tRNA(Gln) + L-glutamate + ADP + phosphate + H(+). The enzyme catalyses L-aspartyl-tRNA(Asn) + L-glutamine + ATP + H2O = L-asparaginyl-tRNA(Asn) + L-glutamate + ADP + phosphate + 2 H(+). Its function is as follows. Allows the formation of correctly charged Asn-tRNA(Asn) or Gln-tRNA(Gln) through the transamidation of misacylated Asp-tRNA(Asn) or Glu-tRNA(Gln) in organisms which lack either or both of asparaginyl-tRNA or glutaminyl-tRNA synthetases. The reaction takes place in the presence of glutamine and ATP through an activated phospho-Asp-tRNA(Asn) or phospho-Glu-tRNA(Gln). This is Aspartyl/glutamyl-tRNA(Asn/Gln) amidotransferase subunit B from Streptococcus thermophilus (strain ATCC BAA-491 / LMD-9).